The following is a 299-amino-acid chain: NmrA-like family domain-containing protein 1 (299 aa).

NADP(+)-binding positions include 11–16, 37–41, 58–59, Gln62, 79–81, Lys92, Lys133, and 155–158; these read GGTGAQ, RNPRK, DQ, TNY, and YFEN. Residues 153–189 are interaction with ASS1; sequence PCYFENLLSHFLPQKAPDGKSYLLSLPTGDVPMDGMS.

Belongs to the NmrA-type oxidoreductase family. As to quaternary structure, homodimer. Interacts with ASS1. Interaction is enhanced by low NADPH/NADP(+) ratios, which results in inhibition of ASS1 activity.

It localises to the cytoplasm. The protein resides in the perinuclear region. It is found in the nucleus. Redox sensor protein. Undergoes restructuring and subcellular redistribution in response to changes in intracellular NADPH/NADP(+) levels. At low NADPH concentrations the protein is found mainly as a monomer, and binds argininosuccinate synthase (ASS1), the enzyme involved in nitric oxide synthesis. Association with ASS1 impairs its activity and reduces the production of nitric oxide, which subsecuently prevents apoptosis. Under normal NADPH concentrations, the protein is found as a dimer and hides the binding site for ASS1. The homodimer binds one molecule of NADPH. Has higher affinity for NADPH than for NADP(+). Binding to NADPH is necessary to form a stable dimer. The polypeptide is NmrA-like family domain-containing protein 1 (NMRAL1) (Homo sapiens (Human)).